The sequence spans 156 residues: SsrA-binding protein (156 aa).

It belongs to the SmpB family.

It localises to the cytoplasm. In terms of biological role, required for rescue of stalled ribosomes mediated by trans-translation. Binds to transfer-messenger RNA (tmRNA), required for stable association of tmRNA with ribosomes. tmRNA and SmpB together mimic tRNA shape, replacing the anticodon stem-loop with SmpB. tmRNA is encoded by the ssrA gene; the 2 termini fold to resemble tRNA(Ala) and it encodes a 'tag peptide', a short internal open reading frame. During trans-translation Ala-aminoacylated tmRNA acts like a tRNA, entering the A-site of stalled ribosomes, displacing the stalled mRNA. The ribosome then switches to translate the ORF on the tmRNA; the nascent peptide is terminated with the 'tag peptide' encoded by the tmRNA and targeted for degradation. The ribosome is freed to recommence translation, which seems to be the essential function of trans-translation. The protein is SsrA-binding protein of Thermoanaerobacter pseudethanolicus (strain ATCC 33223 / 39E) (Clostridium thermohydrosulfuricum).